Consider the following 311-residue polypeptide: MEKELEEYKSQLALVQISLQKTPQNEELQLLENDLKELISLTENLLQESVENDKNTFQNSQNGVAGFNTSKPVHIDFTPGNLVMARWVSGDYLFYPSRITAVSGFGANKKYTVQFLDYPDIETVSLKHIKAMPEEKRQEIEGNKEILKKSTTIRSTPVREPTKAISVASMSTSPSNYASRASSPDMKSSAAVTANVSPIQNVAQHVSTLPKISPIPPSNPPPVPSVSYSQKQQKQLKPKAALEASQNSWKQFAARGVKTGRVGKRKKIGESSIFKSTEDFPGRTNPKNFGNVARSGHREKHIYNYREDEDS.

Positions 76–139 (DFTPGNLVMA…KAMPEEKRQE (64 aa)) constitute a Tudor domain. Disordered stretches follow at residues 154 to 183 (RSTPVREPTKAISVASMSTSPSNYASRASS) and 276 to 311 (STEDFPGRTNPKNFGNVARSGHREKHIYNYREDEDS). Polar residues predominate over residues 168–183 (ASMSTSPSNYASRASS). A Phosphoserine modification is found at Ser-173. A compositionally biased stretch (basic and acidic residues) spans 301-311 (HIYNYREDEDS).

The protein belongs to the SMN family. As to quaternary structure, associates with spliceosomes.

It is found in the nucleus. Its function is as follows. Involved in spliceosome assembly. This is Splicing factor spf30 (spf30) from Schizosaccharomyces pombe (strain 972 / ATCC 24843) (Fission yeast).